The following is a 109-amino-acid chain: Irditoxin subunit A (109 aa).

An N-terminal signal peptide occupies residues 1-19 (MKTLLLAVAVVAFVCLGSA). Residues 20 to 34 (DQLGLGRQQIDWGQG) constitute a propeptide that is removed on maturation. Glutamine 35 carries the post-translational modification Pyrrolidone carboxylic acid. Cystine bridges form between cysteine 44-cysteine 66, cysteine 47-cysteine 55, cysteine 61-cysteine 85, cysteine 89-cysteine 100, and cysteine 101-cysteine 106.

It belongs to the three-finger toxin family. Ancestral subfamily. Boigatoxin sub-subfamily. In terms of assembly, heterodimer of A and B chains; disulfide-linked. Expressed by the venom gland.

It localises to the secreted. Functionally, this bird and reptile-specific postsynaptic neurotoxin inhibits the chick muscle alpha-1-beta-1-gamma-delta (CHRNA1-CHRNB1-CHRNG-CHNRD) nicotinic acetylcholine receptor (nAChR) 100-fold more compared with the mouse receptor. In vivo, produces rapid flaccid paralysis, dyspnea and increased respiratory rate in geckos. At sublethal doses geckos were immobilized for up to three days and then recovered. Chicks injected with lethal doses showed rapid onset of inactivity, dyspnea and neck droop, and no extended paralysis with survival was seen. The chain is Irditoxin subunit A from Boiga irregularis (Brown tree snake).